The primary structure comprises 340 residues: Ketol-acid reductoisomerase (NADP(+)) (340 aa).

Residues 3 to 183 form the KARI N-terminal Rossmann domain; the sequence is VSIYYDKDCD…GGGRTGIIET (181 aa). NADP(+)-binding positions include 26-29, K49, S54, and 84-87; these read FGSQ and DEIQ. H109 is a catalytic residue. G135 contacts NADP(+). A KARI C-terminal knotted domain is found at 184 to 329; sequence TFKAETETDL…RELRAMMPWI (146 aa). Mg(2+) contacts are provided by D192, E196, E228, and E232. S253 provides a ligand contact to substrate.

This sequence belongs to the ketol-acid reductoisomerase family. Requires Mg(2+) as cofactor.

It carries out the reaction (2R)-2,3-dihydroxy-3-methylbutanoate + NADP(+) = (2S)-2-acetolactate + NADPH + H(+). The enzyme catalyses (2R,3R)-2,3-dihydroxy-3-methylpentanoate + NADP(+) = (S)-2-ethyl-2-hydroxy-3-oxobutanoate + NADPH + H(+). Its pathway is amino-acid biosynthesis; L-isoleucine biosynthesis; L-isoleucine from 2-oxobutanoate: step 2/4. It participates in amino-acid biosynthesis; L-valine biosynthesis; L-valine from pyruvate: step 2/4. In terms of biological role, involved in the biosynthesis of branched-chain amino acids (BCAA). Catalyzes an alkyl-migration followed by a ketol-acid reduction of (S)-2-acetolactate (S2AL) to yield (R)-2,3-dihydroxy-isovalerate. In the isomerase reaction, S2AL is rearranged via a Mg-dependent methyl migration to produce 3-hydroxy-3-methyl-2-ketobutyrate (HMKB). In the reductase reaction, this 2-ketoacid undergoes a metal-dependent reduction by NADPH to yield (R)-2,3-dihydroxy-isovalerate. The protein is Ketol-acid reductoisomerase (NADP(+)) of Campylobacter lari (strain RM2100 / D67 / ATCC BAA-1060).